The primary structure comprises 194 residues: Inosine triphosphate pyrophosphatase (194 aa).

10–15 (TSSKKK) provides a ligand contact to ITP. Position 37 (E37) interacts with Mg(2+). ITP is bound by residues K49, 65-66 (DV), K82, 142-145 (FGWD), K166, and 171-172 (HR).

The protein belongs to the HAM1 NTPase family. Homodimer. Mg(2+) serves as cofactor. The cofactor is Mn(2+).

It localises to the cytoplasm. It catalyses the reaction ITP + H2O = IMP + diphosphate + H(+). The catalysed reaction is dITP + H2O = dIMP + diphosphate + H(+). The enzyme catalyses XTP + H2O = XMP + diphosphate + H(+). Functionally, pyrophosphatase that hydrolyzes non-canonical purine nucleotides such as inosine triphosphate (ITP), deoxyinosine triphosphate (dITP) or xanthosine 5'-triphosphate (XTP) to their respective monophosphate derivatives. The enzyme does not distinguish between the deoxy- and ribose forms. Probably excludes non-canonical purines from RNA and DNA precursor pools, thus preventing their incorporation into RNA and DNA and avoiding chromosomal lesions. The chain is Inosine triphosphate pyrophosphatase from Giardia intestinalis (strain ATCC 50803 / WB clone C6) (Giardia lamblia).